We begin with the raw amino-acid sequence, 265 residues long: S-acyl fatty acid synthase thioesterase, medium chain (265 aa).

Position 1 is an N-acetylmethionine (methionine 1). Active-site residues include serine 101 and histidine 237.

Belongs to the thioesterase family. Interacts (via C-terminus) with FASN. Detected both in lactating and non-lactating breast epithelium (at protein level). Isoform 2 is up-regulated in bone marrow-derived mononuclear cells of rheumatoid arthritis patients.

It is found in the cytoplasm. It localises to the cytosol. It carries out the reaction (9Z)-octadecenoyl-[ACP] + H2O = (9Z)-octadecenoate + holo-[ACP] + H(+). It catalyses the reaction decanoyl-CoA + H2O = decanoate + CoA + H(+). The catalysed reaction is dodecanoyl-CoA + H2O = dodecanoate + CoA + H(+). The enzyme catalyses tetradecanoyl-CoA + H2O = tetradecanoate + CoA + H(+). It carries out the reaction hexadecanoyl-CoA + H2O = hexadecanoate + CoA + H(+). Functionally, contributes to the release of free fatty acids from fatty acid synthase (FASN). Has broad substrate specificity, giving rise to a range of free fatty acids with chain lengths between 10 and 16 carbon atoms (C10 - C16). This is S-acyl fatty acid synthase thioesterase, medium chain from Homo sapiens (Human).